The chain runs to 229 residues: Ras-related protein Rab-33B (229 aa).

GTP is bound by residues asparagine 43, valine 44, glycine 45, lysine 46, threonine 47, cysteine 48, threonine 62, and threonine 65. A Mg(2+)-binding site is contributed by threonine 47. A Switch 1 motif is present at residues 56–68 (GRFPDRTEATIGV). Positions 65 and 88 each coordinate Mg(2+). A Switch 2 motif is present at residues 89-108 (TAGQERFRKSMVQHYYRNVH). The GTP site is built by glycine 91, asparagine 148, lysine 149, aspartate 151, alanine 179, and lysine 180. Residues cysteine 227 and cysteine 229 are each lipidated (S-geranylgeranyl cysteine). A Cysteine methyl ester modification is found at cysteine 229.

This sequence belongs to the small GTPase superfamily. Rab family. In terms of assembly, interacts (GTP- and GDP-bound forms) with ATG16L1; the complex consists of a tetramer where two RAB33B molecules bind independently one molecule of the ATG16L1 homodimer; the interaction promotes ATG12-ATG5-ATG16L1 complex recruitment to phagophores. Interacts with ATG16L2; however interaction is approximately hundred times lower than for ATG16L1. Interacts with RIC1 (via C-terminus domain); the interaction is direct with a preference for RAB33B-GTP. Interacts with RGP1. Mg(2+) serves as cofactor. In terms of processing, prenylated. In terms of tissue distribution, ubiquitous.

Its subcellular location is the golgi apparatus membrane. The protein resides in the golgi apparatus. It localises to the cis-Golgi network. The protein localises to the preautophagosomal structure membrane. The enzyme catalyses GTP + H2O = GDP + phosphate + H(+). Regulated by guanine nucleotide exchange factors (GEFs) which promote the exchange of bound GDP for free GTP. Regulated by GTPase activating proteins (GAPs) such as SGSM2 which increase the GTP hydrolysis activity. Inhibited by GDP dissociation inhibitors (GDIs). In terms of biological role, the small GTPases Rab are key regulators of intracellular membrane trafficking, from the formation of transport vesicles to their fusion with membranes. Rabs cycle between an inactive GDP-bound form and an active GTP-bound form that is able to recruit to membranes different sets of downstream effectors directly responsible for vesicle formation, movement, tethering and fusion. RAB33B acts, in coordination with RAB6A, to regulate intra-Golgi retrograde trafficking. Participates in autophagosome formation by recruiting the ATG12-ATG5-ATG16L1 complex to phagophores, probably in a nucleotide-independent manner. This is Ras-related protein Rab-33B from Mus musculus (Mouse).